We begin with the raw amino-acid sequence, 211 residues long: Uracil phosphoribosyltransferase (211 aa).

Residues Arg-78, Arg-103, and 130 to 138 contribute to the 5-phospho-alpha-D-ribose 1-diphosphate site; that span reads DPMLATGGT. Uracil is bound by residues Ile-196 and 201-203; that span reads GDA. Asp-202 provides a ligand contact to 5-phospho-alpha-D-ribose 1-diphosphate.

Belongs to the UPRTase family. It depends on Mg(2+) as a cofactor.

It catalyses the reaction UMP + diphosphate = 5-phospho-alpha-D-ribose 1-diphosphate + uracil. The protein operates within pyrimidine metabolism; UMP biosynthesis via salvage pathway; UMP from uracil: step 1/1. Allosterically activated by GTP. Its function is as follows. Catalyzes the conversion of uracil and 5-phospho-alpha-D-ribose 1-diphosphate (PRPP) to UMP and diphosphate. In Beutenbergia cavernae (strain ATCC BAA-8 / DSM 12333 / CCUG 43141 / JCM 11478 / NBRC 16432 / NCIMB 13614 / HKI 0122), this protein is Uracil phosphoribosyltransferase.